Reading from the N-terminus, the 390-residue chain is tRNA(Met) cytidine acetate ligase (390 aa).

ATP-binding positions include 7–20, Gly-101, Asn-162, and Arg-187; that span reads VVEY…HKLH.

This sequence belongs to the TmcAL family.

It is found in the cytoplasm. It catalyses the reaction cytidine(34) in elongator tRNA(Met) + acetate + ATP = N(4)-acetylcytidine(34) in elongator tRNA(Met) + AMP + diphosphate. Catalyzes the formation of N(4)-acetylcytidine (ac(4)C) at the wobble position of elongator tRNA(Met), using acetate and ATP as substrates. First activates an acetate ion to form acetyladenylate (Ac-AMP) and then transfers the acetyl group to tRNA to form ac(4)C34. The protein is tRNA(Met) cytidine acetate ligase of Listeria monocytogenes serotype 4a (strain HCC23).